The sequence spans 70 residues: Putative antitoxin VapB34 (70 aa).

Functionally, antitoxin component of a possible type II toxin-antitoxin (TA) system. The cognate toxin is VapC34. In Mycobacterium tuberculosis (strain CDC 1551 / Oshkosh), this protein is Putative antitoxin VapB34 (vapB34).